A 220-amino-acid polypeptide reads, in one-letter code: Deoxyribose-phosphate aldolase (220 aa).

Asp-89 serves as the catalytic Proton donor/acceptor. The active-site Schiff-base intermediate with acetaldehyde is Lys-151. Lys-180 serves as the catalytic Proton donor/acceptor.

It belongs to the DeoC/FbaB aldolase family. DeoC type 1 subfamily.

The protein localises to the cytoplasm. The enzyme catalyses 2-deoxy-D-ribose 5-phosphate = D-glyceraldehyde 3-phosphate + acetaldehyde. It participates in carbohydrate degradation; 2-deoxy-D-ribose 1-phosphate degradation; D-glyceraldehyde 3-phosphate and acetaldehyde from 2-deoxy-alpha-D-ribose 1-phosphate: step 2/2. In terms of biological role, catalyzes a reversible aldol reaction between acetaldehyde and D-glyceraldehyde 3-phosphate to generate 2-deoxy-D-ribose 5-phosphate. The sequence is that of Deoxyribose-phosphate aldolase from Streptococcus pneumoniae (strain 70585).